A 148-amino-acid polypeptide reads, in one-letter code: 3-dehydroquinate dehydratase (148 aa).

Y23 serves as the catalytic Proton acceptor. Substrate contacts are provided by N75, H81, and D88. H101 functions as the Proton donor in the catalytic mechanism. Substrate contacts are provided by residues 102–103 (LS) and R112.

The protein belongs to the type-II 3-dehydroquinase family. In terms of assembly, homododecamer.

The enzyme catalyses 3-dehydroquinate = 3-dehydroshikimate + H2O. The protein operates within metabolic intermediate biosynthesis; chorismate biosynthesis; chorismate from D-erythrose 4-phosphate and phosphoenolpyruvate: step 3/7. In terms of biological role, catalyzes a trans-dehydration via an enolate intermediate. The sequence is that of 3-dehydroquinate dehydratase from Xanthomonas campestris pv. campestris (strain 8004).